The chain runs to 220 residues: Sec-independent protein translocase protein TatB (220 aa).

A helical transmembrane segment spans residues 1-21; sequence MFDIGFSELLLVLVIGLVVLG. Residues 192-220 are disordered; sequence KQQIDTIDSHGTDLSSAGPSRIHQPGGDQ.

Belongs to the TatB family. The Tat system comprises two distinct complexes: a TatABC complex, containing multiple copies of TatA, TatB and TatC subunits, and a separate TatA complex, containing only TatA subunits. Substrates initially bind to the TatABC complex, which probably triggers association of the separate TatA complex to form the active translocon.

It localises to the cell inner membrane. Functionally, part of the twin-arginine translocation (Tat) system that transports large folded proteins containing a characteristic twin-arginine motif in their signal peptide across membranes. Together with TatC, TatB is part of a receptor directly interacting with Tat signal peptides. TatB may form an oligomeric binding site that transiently accommodates folded Tat precursor proteins before their translocation. The sequence is that of Sec-independent protein translocase protein TatB from Yersinia pestis bv. Antiqua (strain Antiqua).